We begin with the raw amino-acid sequence, 211 residues long: SAGA-associated factor 11 homolog 1 (211 aa).

The segment at 115 to 136 (CTCPNCDRLVAAARFAPHLEKC) adopts an SGF11-type zinc-finger fold. The tract at residues 149-211 (RRLATKEGSS…GSKKNNGKTF (63 aa)) is disordered. A compositionally biased stretch (low complexity) spans 157–166 (SSASTSSTST). Serine 187 bears the Phosphoserine mark. Low complexity predominate over residues 197–211 (SSRNNGSKKNNGKTF).

It belongs to the SGF11 family. Component of some SAGA transcription coactivator-HAT complexes, at least composed of Ada2b, not/nonstop, Pcaf/Gcn5, Sgf11 and Spt3. Within the SAGA complex, Sgf11, e(y)2, and not/nonstop form an additional subcomplex of SAGA called the DUB module (deubiquitination module). Interacts directly with not/nonstop. Interacts with the AMEX complex component xmas-2. Interacts with Cbp80; important for promoter recruitment of Sgf11 that is not associated with the DUB module.

It is found in the nucleus. Its subcellular location is the nucleoplasm. It localises to the cytoplasm. Functionally, component of the transcription regulatory histone acetylation (HAT) complex SAGA, a multiprotein complex that activates transcription by remodeling chromatin and mediating histone acetylation and deubiquitination. Within the SAGA complex, participates in a subcomplex that specifically deubiquitinates histone H2B. The SAGA complex is recruited to specific gene promoters by activators, where it is required for transcription. Required for nuclear receptor-mediated transactivation. Binds independently on SAGA to promoters in an RNA-dependent manner. Binds to mRNA and is essential for total mRNA export from the nucleus. Required to counteract heterochromatin silencing. Controls the development of neuronal connectivity in visual system by being required for accurate axon targeting in the optic lobe. Required for expression of ecdysone-induced genes such as br/broad. This Drosophila grimshawi (Hawaiian fruit fly) protein is SAGA-associated factor 11 homolog 1.